We begin with the raw amino-acid sequence, 225 residues long: Putative N-acetylmannosamine-6-phosphate 2-epimerase (225 aa).

The protein belongs to the NanE family.

It catalyses the reaction an N-acyl-D-glucosamine 6-phosphate = an N-acyl-D-mannosamine 6-phosphate. It functions in the pathway amino-sugar metabolism; N-acetylneuraminate degradation; D-fructose 6-phosphate from N-acetylneuraminate: step 3/5. Its function is as follows. Converts N-acetylmannosamine-6-phosphate (ManNAc-6-P) to N-acetylglucosamine-6-phosphate (GlcNAc-6-P). This is Putative N-acetylmannosamine-6-phosphate 2-epimerase from Vibrio vulnificus (strain CMCP6).